We begin with the raw amino-acid sequence, 351 residues long: Phosphoribosylformylglycinamidine cyclo-ligase (351 aa).

Belongs to the AIR synthase family.

It localises to the cytoplasm. It catalyses the reaction 2-formamido-N(1)-(5-O-phospho-beta-D-ribosyl)acetamidine + ATP = 5-amino-1-(5-phospho-beta-D-ribosyl)imidazole + ADP + phosphate + H(+). The protein operates within purine metabolism; IMP biosynthesis via de novo pathway; 5-amino-1-(5-phospho-D-ribosyl)imidazole from N(2)-formyl-N(1)-(5-phospho-D-ribosyl)glycinamide: step 2/2. The sequence is that of Phosphoribosylformylglycinamidine cyclo-ligase from Burkholderia multivorans (strain ATCC 17616 / 249).